Here is a 362-residue protein sequence, read N- to C-terminus: Cobalt-precorrin-5B C(1)-methyltransferase (362 aa).

Belongs to the CbiD family.

It carries out the reaction Co-precorrin-5B + S-adenosyl-L-methionine = Co-precorrin-6A + S-adenosyl-L-homocysteine. It participates in cofactor biosynthesis; adenosylcobalamin biosynthesis; cob(II)yrinate a,c-diamide from sirohydrochlorin (anaerobic route): step 6/10. Catalyzes the methylation of C-1 in cobalt-precorrin-5B to form cobalt-precorrin-6A. The chain is Cobalt-precorrin-5B C(1)-methyltransferase from Burkholderia cenocepacia (strain HI2424).